The sequence spans 395 residues: WW domain-containing transcription regulator protein 1 (395 aa).

K46 is covalently cross-linked (Glycyl lysine isopeptide (Lys-Gly) (interchain with G-Cter in ubiquitin)). Residues 52-116 (FFKEPDSGSH…AQQHAHLRQQ (65 aa)) are disordered. Residues 61 to 70 (HSRQSSTDSS) show a composition bias toward polar residues. S62 is subject to Phosphoserine. S89 carries the phosphoserine; by LATS2 modification. One can recognise a WW domain in the interval 124–157 (LPLPPGWEMTFTATGQRYFLNHIEKITTWQDPRK). The tract at residues 221–395 (PNALTTQQQQ…NKSEPFLTWL (175 aa)) is required for interaction with PALS1. A coiled-coil region spans residues 224–258 (LTTQQQQQQKLRLQRIQMERERIRMRQEELMRQEA). Over residues 277 to 293 (PAMSTDMRSVTNSSSDP) the composition is skewed to polar residues. Residues 277–308 (PAMSTDMRSVTNSSSDPFLNGGPYHSREQSTD) are disordered. S290 carries the phosphoserine modification. Position 306 is a phosphoserine; by LATS2 (S306). Residues 389–395 (EPFLTWL) carry the PDZ-binding motif.

In terms of assembly, binds to SLC9A3R2 via the PDZ motif at the plasma membrane. Binds to YWHAZ in vivo and in vitro through the phosphoserine-binding motif RSHSSP. Interacts (via coiled-coil domain) with SMAD2 (via MH1 domain), SMAD3 and SMAD4. Interacts with MED15. Interacts with PAX8 and NKX2-1. Interacts with TEAD1, TEAD2, TEAD3 and TEAD4. Interacts (via WW domain) with PALS1. Interacts with LATS1. Interacts with YAP1 (when phosphorylated at 'Ser-112'). Interacts (via WW domain) with PRRG4 (via cytoplasmic domain). Interacts (via WW domain) with AMOTL2 (via PPXY motif); the interaction promotes WWTR1/TAZ localization to the cytoplasm and tight junctions, thereby inhibiting its transcriptional coactivator properties. Interacts (via WW domain) with AMOT; the interaction facilitates translocation of WWTR1/TAZ to the cytoplasm. Phosphorylated by LATS2 and STK3/MST2. Phosphorylation by LATS2 results in creation of 14-3-3 binding sites, retention in the cytoplasm, and functional inactivation. Phosphorylation results in the inhibition of transcriptional coactivation through YWHAZ-mediated nuclear export. Post-translationally, ubiquitinated at Lys-46; leading to proteasomal degradation. Deubiquitinated and stabilized by UCHL1 at Lys-46; leading to inhibition of osteoclastogenesis. Highly expressed in kidney, heart, placenta and lung.

It is found in the nucleus. The protein resides in the cytoplasm. Its subcellular location is the cell membrane. The protein localises to the cell junction. It localises to the tight junction. Transcriptional coactivator which acts as a downstream regulatory target in the Hippo signaling pathway that plays a pivotal role in organ size control and tumor suppression by restricting proliferation and promoting apoptosis. The core of this pathway is composed of a kinase cascade wherein STK3/MST2 and STK4/MST1, in complex with its regulatory protein SAV1, phosphorylates and activates LATS1/2 in complex with its regulatory protein MOB1, which in turn phosphorylates and inactivates YAP1 oncoprotein and WWTR1/TAZ. WWTR1 enhances PAX8 and NKX2-1/TTF1-dependent gene activation. In conjunction with YAP1, involved in the regulation of TGFB1-dependent SMAD2 and SMAD3 nuclear accumulation. Plays a key role in coupling SMADs to the transcriptional machinery such as the mediator complex. Regulates embryonic stem-cell self-renewal, promotes cell proliferation and epithelial-mesenchymal transition. The sequence is that of WW domain-containing transcription regulator protein 1 from Mus musculus (Mouse).